We begin with the raw amino-acid sequence, 188 residues long: Phosphoribosylglycinamide formyltransferase (188 aa).

Position 12–14 (12–14 (GSN)) interacts with N(1)-(5-phospho-beta-D-ribosyl)glycinamide. (6R)-10-formyltetrahydrofolate is bound by residues K66, 91–94 (MRLV), and N108. H110 (proton donor) is an active-site residue.

Belongs to the GART family.

It carries out the reaction N(1)-(5-phospho-beta-D-ribosyl)glycinamide + (6R)-10-formyltetrahydrofolate = N(2)-formyl-N(1)-(5-phospho-beta-D-ribosyl)glycinamide + (6S)-5,6,7,8-tetrahydrofolate + H(+). It functions in the pathway purine metabolism; IMP biosynthesis via de novo pathway; N(2)-formyl-N(1)-(5-phospho-D-ribosyl)glycinamide from N(1)-(5-phospho-D-ribosyl)glycinamide (10-formyl THF route): step 1/1. Catalyzes the transfer of a formyl group from 10-formyltetrahydrofolate to 5-phospho-ribosyl-glycinamide (GAR), producing 5-phospho-ribosyl-N-formylglycinamide (FGAR) and tetrahydrofolate. This is Phosphoribosylglycinamide formyltransferase from Staphylococcus epidermidis (strain ATCC 35984 / DSM 28319 / BCRC 17069 / CCUG 31568 / BM 3577 / RP62A).